The sequence spans 184 residues: Adenine phosphoribosyltransferase (184 aa).

This sequence belongs to the purine/pyrimidine phosphoribosyltransferase family. Homodimer.

It is found in the cytoplasm. It carries out the reaction AMP + diphosphate = 5-phospho-alpha-D-ribose 1-diphosphate + adenine. Its pathway is purine metabolism; AMP biosynthesis via salvage pathway; AMP from adenine: step 1/1. Functionally, catalyzes a salvage reaction resulting in the formation of AMP, that is energically less costly than de novo synthesis. This Blochmanniella pennsylvanica (strain BPEN) protein is Adenine phosphoribosyltransferase.